The sequence spans 490 residues: Betaine aldehyde dehydrogenase (490 aa).

K(+)-binding residues include Thr26, Ile27, and Asp93. 150–152 lines the NAD(+) pocket; that stretch reads GAW. The active-site Charge relay system is Lys162. 176-179 contacts NAD(+); that stretch reads KPSE. A K(+)-binding site is contributed by Val180. 230–233 serves as a coordination point for NAD(+); it reads GVAS. Residue Leu246 coordinates K(+). Residue Glu252 is the Proton acceptor of the active site. 3 residues coordinate NAD(+): Gly254, Cys286, and Glu387. The active-site Nucleophile is the Cys286. Cys286 bears the Cysteine sulfenic acid (-SOH) mark. K(+) contacts are provided by Lys457 and Gly460. Glu464 (charge relay system) is an active-site residue.

The protein belongs to the aldehyde dehydrogenase family. In terms of assembly, dimer of dimers. K(+) serves as cofactor.

It catalyses the reaction betaine aldehyde + NAD(+) + H2O = glycine betaine + NADH + 2 H(+). It functions in the pathway amine and polyamine biosynthesis; betaine biosynthesis via choline pathway; betaine from betaine aldehyde: step 1/1. Involved in the biosynthesis of the osmoprotectant glycine betaine. Catalyzes the irreversible oxidation of betaine aldehyde to the corresponding acid. The sequence is that of Betaine aldehyde dehydrogenase from Shigella flexneri serotype 5b (strain 8401).